A 120-amino-acid chain; its full sequence is Holo-[acyl-carrier-protein] synthase (120 aa).

The Mg(2+) site is built by aspartate 8 and glutamate 58.

The protein belongs to the P-Pant transferase superfamily. AcpS family. Requires Mg(2+) as cofactor.

The protein localises to the cytoplasm. It carries out the reaction apo-[ACP] + CoA = holo-[ACP] + adenosine 3',5'-bisphosphate + H(+). In terms of biological role, transfers the 4'-phosphopantetheine moiety from coenzyme A to a Ser of acyl-carrier-protein. The chain is Holo-[acyl-carrier-protein] synthase from Streptococcus sanguinis (strain SK36).